The sequence spans 187 residues: UPF0301 protein SO_3346 (187 aa).

This sequence belongs to the UPF0301 (AlgH) family.

This Shewanella oneidensis (strain ATCC 700550 / JCM 31522 / CIP 106686 / LMG 19005 / NCIMB 14063 / MR-1) protein is UPF0301 protein SO_3346.